The following is a 123-amino-acid chain: KxDL motif-containing protein LO9-177 (123 aa).

The KxDL motif lies at 78-81 (KDDL).

It belongs to the KXD1 family. Homodimer. Component of a nuclear cell elongation controlling complex made of ILI5/BUL1, LO9-177 and BC1. Binds directly to ILI5/BUL1, ILI4/BU1, BUL2 and BUL3. Binds to BC1 in the nucleus. Interacts with BCL1.

It is found in the nucleus. It localises to the cytoplasm. In terms of biological role, contributes, together with ILI5/BUL1 and BC1, to the promotion of leaf inclination and grain size by modulating cell elongation. The polypeptide is KxDL motif-containing protein LO9-177 (Oryza sativa subsp. indica (Rice)).